The chain runs to 369 residues: P2X receptor B (369 aa).

The Cytoplasmic portion of the chain corresponds to 1–25; sequence MTIDWDSILSYNTIKVVRIRDRRLG. The helical transmembrane segment at 26–46 threads the bilayer; that stretch reads ILHLCFLIVIVLYVVVYSAII. Residues 47 to 369 lie on the Lumenal side of the membrane; the sequence is KKGYVTTEEP…DKLYHNIEAL (323 aa). Residues 283–296 form a pore-forming motif region; it reads RHAIRLIFIQTGVI.

It belongs to the P2X receptor family.

The protein resides in the contractile vacuole membrane. Functionally, P2X receptors are ATP-gated ion channels that play a role in intracellular calcium signaling. Not required for the purinergic response to extracellular nucleotides. Not essential for osmoregulation. Inward currents are evoked by intracellular ATP and ATP analogs. Insensitive to the P2 receptor antagonists PPADS and suramin, and also copper ions. Inhibited by sodium ions. Permeable to chloride ions. The protein is P2X receptor B (p2xB) of Dictyostelium discoideum (Social amoeba).